The chain runs to 207 residues: Claudin-11 (207 aa).

Residue Met1 is a topological domain, cytoplasmic. A helical transmembrane segment spans residues 2-22 (VATCLQVVGFVTSFVGWIGVI). Residues 23 to 82 (VTTSTNDWVVTCGYTIPTCRKLDELGSKGLWADCVMATGLYHCKPLVDILILPGYVQACR) lie on the Extracellular side of the membrane. The helical transmembrane segment at 83 to 103 (ALMIAASVLGLPAILLLLTVL) threads the bilayer. Topologically, residues 104 to 122 (PCIRMGHEPGVAKYRRAQL) are cytoplasmic. A helical transmembrane segment spans residues 123–143 (AGVLLILLALCAIVATIWFPV). The Extracellular segment spans residues 144 to 157 (CAHRETTIVSFGYS). Residues 158 to 178 (LYAGWIGAVLCLVGGCVILCC) traverse the membrane as a helical segment. At 179–207 (AGDAQAFGENRFYYSSGSSSPTHAKSAHV) the chain is on the cytoplasmic side. Phosphoserine occurs at positions 193, 194, 197, and 198.

Belongs to the claudin family. Interacts with tetraspanin-3/TSPAN3. Interacts with OCLN.

Its subcellular location is the cell junction. The protein resides in the tight junction. The protein localises to the cell membrane. Its function is as follows. Plays a major role in tight junction-specific obliteration of the intercellular space, through calcium-independent cell-adhesion activity. This chain is Claudin-11 (CLDN11), found in Macaca fascicularis (Crab-eating macaque).